Consider the following 2068-residue polypeptide: uncharacterized protein (2068 aa).

2 consecutive transmembrane segments (helical) span residues 3-23 (FFII…NFCS) and 51-71 (TIYL…YYYI). The segment covering 975–998 (QMHSGEDEKEELGEPKEKGSKSCQ) has biased composition (basic and acidic residues). The disordered stretch occupies residues 975-1030 (QMHSGEDEKEELGEPKEKGSKSCQEEEEQDEEEEDEDEEEEEDQGVNNYDNYVDGV). Acidic residues predominate over residues 999-1018 (EEEEQDEEEEDEDEEEEEDQ). Residues 1890 to 1910 (FLYNLSFIYNVYNYLILIYIY) traverse the membrane as a helical segment.

The protein localises to the membrane. This is an uncharacterized protein from Plasmodium falciparum (isolate 3D7).